Here is a 571-residue protein sequence, read N- to C-terminus: Protein dead ringer homolog (571 aa).

Disordered stretches follow at residues 45-117 and 190-229; these read QHQQ…EPDK and KRMQ…SCNG. A compositionally biased stretch (basic and acidic residues) spans 49–77; that stretch reads RMMEQHKNDDVISNDVRCDDFSDGGERQR. Over residues 195-206 the composition is skewed to polar residues; sequence DHNIQQSTNHIP. Low complexity predominate over residues 207–224; that stretch reads TPSSASSHTSSGSVTSQT. The 93-residue stretch at 249-341 folds into the ARID domain; it reads DIKRKEFLDD…YLYPFECERE (93 aa). Positions 459–471 are enriched in low complexity; the sequence is AAHHAAQQAAQHQ. The tract at residues 459–528 is disordered; it reads AAHHAAQQAA…GDRGRHNEMS (70 aa). An REKLES domain is found at 473–558; sequence SLKKEIDSDY…GVLFAHSPNH (86 aa). Basic and acidic residues-rich tracts occupy residues 487-507 and 518-527; these read PPEK…DNQR and MGDRGRHNEM.

It is found in the nucleus. Transcription factor. In Ciona intestinalis (Transparent sea squirt), this protein is Protein dead ringer homolog (Ci-DRIL1/2).